A 310-amino-acid chain; its full sequence is MASNAKRRALEPERLPERNEEEEDDMEGDNSDESDDIEDDESEEEEEVNEEVNIDFEAYTISDTDSEGIKKLLKQLFLKAHVNISELTDLLIQQNHIGSAIKQAESQEDSDDDDDDDVDHVFGFISLVNLTERKGTSCVEQIKELILTRCEENCEQSMVEQFDKVLNNNSKPVGFLLSERFINVPAQIALPMHQQLQKELADTQRTNKPCGKCYYYLILSKTFVEAAKTSKGRVGSQAKEELMFANAEDEFFYEKALLKFSYSVQEESDTQLGGRWSFSDVPMKPLRTVMLVPADRMNSIMDKFKEYLSV.

The disordered stretch occupies residues 1 to 59 (MASNAKRRALEPERLPERNEEEEDDMEGDNSDESDDIEDDESEEEEEVNEEVNIDFEAY). Basic and acidic residues predominate over residues 8–18 (RALEPERLPER). Positions 19–54 (NEEEEDDMEGDNSDESDDIEDDESEEEEEVNEEVNI) are enriched in acidic residues.

This sequence belongs to the BCP1 family.

The protein localises to the nucleus. It is found in the cytoplasm. Its subcellular location is the cytoskeleton. The protein resides in the microtubule organizing center. It localises to the centrosome. The protein localises to the centriole. It is found in the spindle pole. During interphase, required for microtubule organizing and anchoring activities. During mitosis, required for the organization and stabilization of the spindle pole. May promote cell cycle arrest and DNA repair. The chain is Protein BCCIP homolog (bccip) from Xenopus tropicalis (Western clawed frog).